Here is a 276-residue protein sequence, read N- to C-terminus: NAD kinase (276 aa).

Aspartate 66 functions as the Proton acceptor in the catalytic mechanism. NAD(+)-binding positions include 66-67, 139-140, aspartate 168, 179-184, and glutamine 234; these read DG, ND, and TAYNIS.

Belongs to the NAD kinase family. The cofactor is a divalent metal cation.

Its subcellular location is the cytoplasm. It carries out the reaction NAD(+) + ATP = ADP + NADP(+) + H(+). In terms of biological role, involved in the regulation of the intracellular balance of NAD and NADP, and is a key enzyme in the biosynthesis of NADP. Catalyzes specifically the phosphorylation on 2'-hydroxyl of the adenosine moiety of NAD to yield NADP. The polypeptide is NAD kinase (Campylobacter lari (strain RM2100 / D67 / ATCC BAA-1060)).